The primary structure comprises 314 residues: MNSGVPATLAVRRVKFFGQHGGEVNSSAFSPDGQMLLTGSEDGCVYGWETRSGQLLWRLGGHTGPVKFCRFSPDGHLFASASCDCTVRLWDVARAKCLRVLKGHQRSVETVSFSPDSRQLASGGWDKRVMLWDVQSGQMLRLLVGHRDSIQSSDFSPTVNCLATGSWDSTVHIWDLRMVTPAVSHQALEGHSANISCLCYSASGLLASGSWDKTIHIWKPTTSSLLIQLKGHVTWVKSIAFSPDELWLASAGYSRMVKVWDCNTGKCLETLKGVLDVAHTCAFTPDGKILVSGAADQTRRQISRTSKSPRDPQT.

WD repeat units lie at residues 19–58 (QHGG…LLWR), 61–100 (GHTG…CLRV), 103–142 (GHQR…MLRL), 145–184 (GHRD…PAVS), 190–228 (GHSA…LLIQ), 231–272 (GHVT…ETLK), and 274–312 (VLDV…PRDP). Residues 294 to 314 (AADQTRRQISRTSKSPRDPQT) form a disordered region.

This chain is WD repeat-containing protein 38 (WDR38), found in Homo sapiens (Human).